Here is a 118-residue protein sequence, read N- to C-terminus: 5-hydroxyisourate hydrolase (118 aa).

3 residues coordinate substrate: histidine 7, arginine 46, and tyrosine 115.

It belongs to the transthyretin family. 5-hydroxyisourate hydrolase subfamily. As to quaternary structure, homotetramer.

The catalysed reaction is 5-hydroxyisourate + H2O = 5-hydroxy-2-oxo-4-ureido-2,5-dihydro-1H-imidazole-5-carboxylate + H(+). Functionally, catalyzes the hydrolysis of 5-hydroxyisourate (HIU) to 2-oxo-4-hydroxy-4-carboxy-5-ureidoimidazoline (OHCU). In Brucella suis biovar 1 (strain 1330), this protein is 5-hydroxyisourate hydrolase.